The primary structure comprises 276 residues: Shikimate dehydrogenase (NADP(+)) (276 aa).

Shikimate-binding positions include 19–21 and threonine 66; that span reads SKS. Lysine 70 (proton acceptor) is an active-site residue. Aspartate 82 contributes to the NADP(+) binding site. Residues asparagine 91 and aspartate 107 each coordinate shikimate. Residues 133-137, 157-162, and leucine 222 contribute to the NADP(+) site; these read GAGGA and NRTRSR. Shikimate is bound at residue tyrosine 224. Glycine 245 serves as a coordination point for NADP(+).

The protein belongs to the shikimate dehydrogenase family. Homodimer.

It catalyses the reaction shikimate + NADP(+) = 3-dehydroshikimate + NADPH + H(+). The protein operates within metabolic intermediate biosynthesis; chorismate biosynthesis; chorismate from D-erythrose 4-phosphate and phosphoenolpyruvate: step 4/7. In terms of biological role, involved in the biosynthesis of the chorismate, which leads to the biosynthesis of aromatic amino acids. Catalyzes the reversible NADPH linked reduction of 3-dehydroshikimate (DHSA) to yield shikimate (SA). The polypeptide is Shikimate dehydrogenase (NADP(+)) (Ruegeria sp. (strain TM1040) (Silicibacter sp.)).